The sequence spans 578 residues: Acyl-CoA synthetase ACTT5 (578 aa).

211 to 222 (RLTTSGTTGLPK) contributes to the AMP binding site. The interval 472–551 (ELEAALLQAK…DEIPRSPTGK (80 aa)) is AMP-binding.

Belongs to the ATP-dependent AMP-binding enzyme family.

It participates in mycotoxin biosynthesis. Functionally, acyl-CoA synthetase; part of the gene clusters that mediate the biosynthesis of the host-selective toxins (HSTs) ACT-toxins responsible for brown spot of tangerine disease by the tangerine pathotype which affects tangerines and mandarins. ACT-toxins consist of three moieties, 9,10-epoxy-8-hydroxy-9-methyl-decatrienoic acid (EDA), valine and a polyketide. ACT-toxin I is toxic to both citrus and pear; toxin II the 5''-deoxy derivative of ACT-toxin I, is highly toxic to pear and slightly toxic to citrus. On cellular level, ACT-toxins affect plasma membrane of susceptible cells and cause a sudden increase in loss of K(+) after a few minutes of toxin treatment. The acyl-CoA ligase ACTT1, the hydrolase ACTT2, the enoyl-CoA hydratases ACTT3 and ACTT6, and the acyl-CoA synthetase ACTT5 are all involved in the biosynthesis of the AK-, AF- and ACT-toxin common 9,10-epoxy-8-hydroxy-9-methyl-decatrienoic acid (EDA) structural moiety. The exact role of each enzyme, and of additional enzymes identified within the AF-toxin clusters have still to be determined. On the other hand, ACTTS1 to ACTTS4 are specific to the tangerine pathotype. The function of ACTTS3 is to elongate the polyketide chain portion of ACT-toxin that is unique to this toxin. The enoyl-reductase ACTTS2 might complement the missing enoyl-reductase (ER) domain in ACTTS3 in the synthesis of the polyketide portion of ACT-toxin. The roles of the nonribosomal peptide synthetases-related proteins ACTTS1 and ACTTS4 have also still not been elucidated. The polypeptide is Acyl-CoA synthetase ACTT5 (Alternaria alternata (Alternaria rot fungus)).